The following is a 37-amino-acid chain: Large ribosomal subunit protein bL36 (37 aa).

Belongs to the bacterial ribosomal protein bL36 family.

The protein is Large ribosomal subunit protein bL36 of Desulforapulum autotrophicum (strain ATCC 43914 / DSM 3382 / VKM B-1955 / HRM2) (Desulfobacterium autotrophicum).